Here is a 348-residue protein sequence, read N- to C-terminus: Phosphatidylinositol 3,4,5-trisphosphate 3-phosphatase ptn1 (348 aa).

In terms of domain architecture, Phosphatase tensin-type spans 18–189 (EKVNRSFAYL…YYIEILKQFP (172 aa)). Cys-129 serves as the catalytic Phosphocysteine intermediate.

The protein localises to the cytoplasmic vesicle. The enzyme catalyses a 1,2-diacyl-sn-glycero-3-phospho-(1D-myo-inositol-3,4,5-trisphosphate) + H2O = a 1,2-diacyl-sn-glycero-3-phospho-(1D-myo-inositol-4,5-bisphosphate) + phosphate. It carries out the reaction 1,2-dioctanoyl-sn-glycero-3-phospho-(1D-myo-inositol-3,4,5-trisphosphate) + H2O = 1,2-dioctanoyl-sn-glycero-3-phospho-(1D-myo-inositol-4,5-bisphosphate) + phosphate. It catalyses the reaction 1,2-dihexadecanoyl-sn-glycero-3-phospho-(1D-myo-inositol-3,4,5-trisphosphate) + H2O = 1,2-dihexadecanoyl-sn-glycero-3-phospho-(1D-myo-inositol-4,5-bisphosphate) + phosphate. Acts as a phosphoinositide 3-phosphatase and regulates PtdIns(3,4,5)P3 levels. In Schizosaccharomyces pombe (strain 972 / ATCC 24843) (Fission yeast), this protein is Phosphatidylinositol 3,4,5-trisphosphate 3-phosphatase ptn1 (ptn1).